The chain runs to 48 residues: Delta-stichotoxin-Hcr1e (48 aa).

Cystine bridges form between C3–C43, C5–C33, and C26–C44.

This sequence belongs to the sea anemone sodium channel inhibitory toxin family. Type II subfamily.

It is found in the secreted. Its subcellular location is the nematocyst. Functionally, binds to site 3 of voltage-gated sodium channels and inhibits the inactivation process. This is Delta-stichotoxin-Hcr1e from Radianthus crispa (Leathery sea anemone).